Here is a 91-residue protein sequence, read N- to C-terminus: C-C motif chemokine 5 (91 aa).

The first 23 residues, 1–23 (MKVSAATFAILLATATFRAPASA), serve as a signal peptide directing secretion. Cystine bridges form between cysteine 33–cysteine 57 and cysteine 34–cysteine 73.

The protein belongs to the intercrine beta (chemokine CC) family.

It is found in the secreted. Chemoattractant for blood monocytes, memory T-helper cells and eosinophils. Causes the release of histamine from basophils and activates eosinophils. May activate several chemokine receptors including CCR1, CCR3, CCR4 and CCR5. May also be an agonist of the G protein-coupled receptor GPR75. Together with GPR75, may play a role in neuron survival through activation of a downstream signaling pathway involving the PI3, Akt and MAP kinases. By activating GPR75 may also play a role in insulin secretion by islet cells. The sequence is that of C-C motif chemokine 5 (CCL5) from Canis lupus familiaris (Dog).